Here is a 733-residue protein sequence, read N- to C-terminus: Ribosomal protein S6 kinase 2 alpha (733 aa).

A disordered region spans residues 18 to 38; sequence EDPENGHGSPEEGGRHTSKDE. The region spanning 62-321 is the Protein kinase 1 domain; the sequence is FVLLKVLGQG…AEEIKRQPFF (260 aa). ATP is bound by residues 68 to 76 and K94; that span reads LGQGSFGKV. The Proton acceptor role is filled by D187. At S221 the chain carries Phosphoserine. An AGC-kinase C-terminal domain is found at 322-391; the sequence is STIDWNKLFR…VAPALVEEDA (70 aa). A Phosphothreonine modification is found at T359. Residue S363 is modified to Phosphoserine. S380 is subject to Phosphoserine; by autocatalysis. One can recognise a Protein kinase 2 domain in the interval 416–673; sequence YTVRETIGVG…AKQVLQHEWI (258 aa). Residues 422-430 and K445 contribute to the ATP site; that span reads IGVGSYSVC. Residue D533 is the Proton acceptor of the active site. Position 571 is a phosphothreonine (T571). S730 carries the post-translational modification Phosphoserine.

This sequence belongs to the protein kinase superfamily. AGC Ser/Thr protein kinase family. S6 kinase subfamily. Requires Mg(2+) as cofactor. In terms of processing, autophosphorylated on Ser-380, as part of the activation process.

The enzyme catalyses L-seryl-[protein] + ATP = O-phospho-L-seryl-[protein] + ADP + H(+). The catalysed reaction is L-threonyl-[protein] + ATP = O-phospho-L-threonyl-[protein] + ADP + H(+). Activated by multiple phosphorylations on threonine and serine residues. Serine/threonine kinase that may play a role in mediating the growth-factor and stress induced activation of transcription. The polypeptide is Ribosomal protein S6 kinase 2 alpha (rps6ka) (Xenopus laevis (African clawed frog)).